A 134-amino-acid chain; its full sequence is Prefoldin subunit 4 (134 aa).

Residue alanine 2 is modified to N-acetylalanine. Serine 125 bears the Phosphoserine mark.

It belongs to the prefoldin subunit beta family. Heterohexamer of two PFD-alpha type and four PFD-beta type subunits. Interacts with URI1; the interaction is phosphorylation-dependent and occurs in a growth-dependent manner.

The protein resides in the nucleus. Its subcellular location is the cytoplasm. It is found in the mitochondrion. In terms of biological role, binds specifically to cytosolic chaperonin (c-CPN) and transfers target proteins to it. Binds to nascent polypeptide chain and promotes folding in an environment in which there are many competing pathways for nonnative proteins. The chain is Prefoldin subunit 4 (PFDN4) from Bos taurus (Bovine).